The sequence spans 195 residues: Putative NADH dehydrogenase/NAD(P)H nitroreductase Bcep18194_B1060 (195 aa).

This sequence belongs to the nitroreductase family. HadB/RutE subfamily. FMN is required as a cofactor.

The sequence is that of Putative NADH dehydrogenase/NAD(P)H nitroreductase Bcep18194_B1060 from Burkholderia lata (strain ATCC 17760 / DSM 23089 / LMG 22485 / NCIMB 9086 / R18194 / 383).